Reading from the N-terminus, the 228-residue chain is Cytochrome c oxidase subunit 2 (228 aa).

The Mitochondrial intermembrane portion of the chain corresponds to 1–26 (MATWANLGLQNSSSPLMEQLNFFHDH). The chain crosses the membrane as a helical span at residues 27–48 (TVLILIMITVMITYVMGMLFFN). Topologically, residues 49–62 (KFTNRYLLHGQTIE) are mitochondrial matrix. Residues 63–82 (IIWTILPAIILMFIAFPSLR) traverse the membrane as a helical segment. The Mitochondrial intermembrane portion of the chain corresponds to 83 to 228 (LLYLLDEINS…FIKWVSSQLN (146 aa)). Residues histidine 161, cysteine 196, glutamate 198, cysteine 200, histidine 204, and methionine 207 each coordinate Cu cation. Residue glutamate 198 participates in Mg(2+) binding.

It belongs to the cytochrome c oxidase subunit 2 family. As to quaternary structure, component of the cytochrome c oxidase (complex IV, CIV), a multisubunit enzyme composed of a catalytic core of 3 subunits and several supernumerary subunits. The complex exists as a monomer or a dimer and forms supercomplexes (SCs) in the inner mitochondrial membrane with ubiquinol-cytochrome c oxidoreductase (cytochrome b-c1 complex, complex III, CIII). Cu cation is required as a cofactor.

Its subcellular location is the mitochondrion inner membrane. It carries out the reaction 4 Fe(II)-[cytochrome c] + O2 + 8 H(+)(in) = 4 Fe(III)-[cytochrome c] + 2 H2O + 4 H(+)(out). Functionally, component of the cytochrome c oxidase, the last enzyme in the mitochondrial electron transport chain which drives oxidative phosphorylation. The respiratory chain contains 3 multisubunit complexes succinate dehydrogenase (complex II, CII), ubiquinol-cytochrome c oxidoreductase (cytochrome b-c1 complex, complex III, CIII) and cytochrome c oxidase (complex IV, CIV), that cooperate to transfer electrons derived from NADH and succinate to molecular oxygen, creating an electrochemical gradient over the inner membrane that drives transmembrane transport and the ATP synthase. Cytochrome c oxidase is the component of the respiratory chain that catalyzes the reduction of oxygen to water. Electrons originating from reduced cytochrome c in the intermembrane space (IMS) are transferred via the dinuclear copper A center (CU(A)) of subunit 2 and heme A of subunit 1 to the active site in subunit 1, a binuclear center (BNC) formed by heme A3 and copper B (CU(B)). The BNC reduces molecular oxygen to 2 water molecules using 4 electrons from cytochrome c in the IMS and 4 protons from the mitochondrial matrix. The chain is Cytochrome c oxidase subunit 2 (COII) from Culex quinquefasciatus (Southern house mosquito).